The following is a 129-amino-acid chain: Integration host factor subunit alpha (129 aa).

A disordered region spans residues 87–129 (SALNGEAPPEDHAEIDAREEAAADAAEARGEDFDEEGMEDMEG). Residues 95–117 (PEDHAEIDAREEAAADAAEARGE) are compositionally biased toward basic and acidic residues. The segment covering 118-129 (DFDEEGMEDMEG) has biased composition (acidic residues).

It belongs to the bacterial histone-like protein family. In terms of assembly, heterodimer of an alpha and a beta chain.

Functionally, this protein is one of the two subunits of integration host factor, a specific DNA-binding protein that functions in genetic recombination as well as in transcriptional and translational control. It is necessary for normal cell growth and the production of carotenoids in response to light. The polypeptide is Integration host factor subunit alpha (ihfA) (Myxococcus xanthus).